The primary structure comprises 246 residues: Mast cell protease-like protein (246 aa).

Residues 1–18 form the signal peptide; the sequence is MQALLFLMALLLPSGAGA. Residues 19–20 constitute a propeptide, activation peptide; it reads EE. Positions 21–244 constitute a Peptidase S1 domain; the sequence is IIGGVESEPH…HVPWINRVIK (224 aa). Cys50 and Cys66 are joined by a disulfide. Catalysis depends on charge relay system residues His65 and Asp109. 2 cysteine pairs are disulfide-bonded: Cys143/Cys208 and Cys174/Cys187. Catalysis depends on Ser202, which acts as the Charge relay system.

This sequence belongs to the peptidase S1 family. Granzyme subfamily.

The polypeptide is Mast cell protease-like protein (Mcptl) (Mus musculus (Mouse)).